The following is a 272-amino-acid chain: MSPIIASEHLSNIALGYVDSVDSEYAKRLAKKWQFNYLGHVAAASKQPKLEFMLQMHHHALELCKLDEPKLGAIKVDFVEGAVAHRRKFGGGRGQDIAKAVGLKHGFKPHVLDATAGLGRDAFVLASLGCKLTLLERMPVVAALLDDGIERAKLNHEVADIANNMQLIHGSSLEEVDLAIEPDVVYLDPMYPHREKSAAVKKEMRIFQSLVGEDLDADDLLEPALALAKYRVVVKRPSYAPPLANKKPSMSINMKKNRFDVYVKQAIPKPIT.

S-adenosyl-L-methionine is bound by residues 120–121 (RD), 136–137 (ER), 171–172 (SS), and Asp-188.

Belongs to the methyltransferase superfamily. RsmJ family.

The protein resides in the cytoplasm. It carries out the reaction guanosine(1516) in 16S rRNA + S-adenosyl-L-methionine = N(2)-methylguanosine(1516) in 16S rRNA + S-adenosyl-L-homocysteine + H(+). Functionally, specifically methylates the guanosine in position 1516 of 16S rRNA. This is Ribosomal RNA small subunit methyltransferase J from Colwellia psychrerythraea (strain 34H / ATCC BAA-681) (Vibrio psychroerythus).